The sequence spans 400 residues: Enoyl-[acyl-carrier-protein] reductase [NADH] (400 aa).

NAD(+) contacts are provided by residues 48–53 (GSSSGY), 74–75 (FE), 111–112 (DA), and 139–140 (LA). Tyr-225 contacts substrate. Catalysis depends on Tyr-235, which acts as the Proton donor. Residues Lys-244 and 273 to 275 (VVT) each bind NAD(+).

It belongs to the TER reductase family. As to quaternary structure, monomer.

It catalyses the reaction a 2,3-saturated acyl-[ACP] + NAD(+) = a (2E)-enoyl-[ACP] + NADH + H(+). It functions in the pathway lipid metabolism; fatty acid biosynthesis. In terms of biological role, involved in the final reduction of the elongation cycle of fatty acid synthesis (FAS II). Catalyzes the reduction of a carbon-carbon double bond in an enoyl moiety that is covalently linked to an acyl carrier protein (ACP). This is Enoyl-[acyl-carrier-protein] reductase [NADH] from Aliivibrio fischeri (strain ATCC 700601 / ES114) (Vibrio fischeri).